The following is a 145-amino-acid chain: MKKILVINGPNLNLLGIREKDIYGSTNYNKLLEIISKKANELNLNTLFFQSNHEGEIIDRIHKALDENIDGIIINPGAYTHYSYAIHDAIKAVNIPTIEVHISNIYAREEFRKRSVIAPACVGQISGFGIKSYIIALYALKEILG.

Y23 acts as the Proton acceptor in catalysis. The substrate site is built by N75, H81, and D88. Residue H101 is the Proton donor of the active site. Substrate-binding positions include I102–S103 and R112.

The protein belongs to the type-II 3-dehydroquinase family. Homododecamer.

The enzyme catalyses 3-dehydroquinate = 3-dehydroshikimate + H2O. It participates in metabolic intermediate biosynthesis; chorismate biosynthesis; chorismate from D-erythrose 4-phosphate and phosphoenolpyruvate: step 3/7. In terms of biological role, catalyzes a trans-dehydration via an enolate intermediate. The sequence is that of 3-dehydroquinate dehydratase from Caldicellulosiruptor saccharolyticus (strain ATCC 43494 / DSM 8903 / Tp8T 6331).